The sequence spans 287 residues: uncharacterized protein (287 aa).

In terms of domain architecture, THUMP spans 133-239 (CEVGKTKKMT…KNIIGISIVQ (107 aa)). A disordered region spans residues 257 to 287 (ENTKSIPNDSKLDNFDRDKNQIINDKAEHAE). A compositionally biased stretch (basic and acidic residues) spans 266–287 (SKLDNFDRDKNQIINDKAEHAE).

This is an uncharacterized protein from Schizosaccharomyces pombe (strain 972 / ATCC 24843) (Fission yeast).